The following is a 353-amino-acid chain: Transcription factor MafA (353 aa).

Ser-14 bears the Phosphoserine mark. Residue Lys-32 forms a Glycyl lysine isopeptide (Lys-Gly) (interchain with G-Cter in SUMO2) linkage. Disordered stretches follow at residues 40 to 108 (RFCH…GGTS) and 177 to 219 (ADDM…GAGH). Residues 46 to 73 (PPGSLSSTPLSTPCSSVPSSPSFCAPSP) are compositionally biased toward low complexity. Ser-49 is subject to Phosphoserine. A phosphothreonine mark is found at Thr-53 and Thr-57. 2 positions are modified to phosphoserine: Ser-61 and Ser-65. Gly residues predominate over residues 74 to 93 (GTGGGGGAGGGGGSSQAGGA). Residues 183 to 210 (GHHHGAHHAAHHHHAAHHHHHHHHHHGG) are compositionally biased toward basic residues. Positions 254-279 (RLKQKRRTLKNRGYAQSCRFKRVQQR) are basic motif. Residues 254–317 (RLKQKRRTLK…DLYKEKYEKL (64 aa)) form the bZIP domain. Positions 282–303 (LESEKCQLQSQVEQLKLEVGRL) are leucine-zipper. Residues 315-353 (EKLAGRGGPGSAGGAGFPREPSPPQAGPGGAKGTADFFL) are disordered. The segment covering 319 to 330 (GRGGPGSAGGAG) has biased composition (gly residues).

The protein belongs to the bZIP family. Maf subfamily. In terms of assembly, forms homodimers or heterodimers. Monomers and dimers are able to bind DNA, but the off-rate is faster for monomers. Interacts with NEUROD1 and PDX1. May interact with MAFB, FOS, JUN and PCAF. Ubiquitinated, leading to its degradation by the proteasome. In terms of processing, phosphorylated at tyrosines. Expressed in the islets of Langerhans (at protein level).

It localises to the nucleus. Its function is as follows. Transcription factor that activates insulin gene expression. Acts synergistically with NEUROD1/BETA2 and PDX1. Binds the insulin enhancer C1/RIPE3b element. Binds to consensus TRE-type MARE 5'-TGCTGACTCAGCA-3' DNA sequence. The protein is Transcription factor MafA (MAFA) of Homo sapiens (Human).